A 334-amino-acid chain; its full sequence is Aspartate carbamoyltransferase catalytic subunit (334 aa).

Residues arginine 71 and threonine 72 each contribute to the carbamoyl phosphate site. Residue lysine 99 participates in L-aspartate binding. Carbamoyl phosphate-binding residues include arginine 121, histidine 151, and glutamine 154. L-aspartate-binding residues include arginine 184 and arginine 239. Carbamoyl phosphate contacts are provided by glycine 280 and proline 281.

The protein belongs to the aspartate/ornithine carbamoyltransferase superfamily. ATCase family. In terms of assembly, heterododecamer (2C3:3R2) of six catalytic PyrB chains organized as two trimers (C3), and six regulatory PyrI chains organized as three dimers (R2).

It catalyses the reaction carbamoyl phosphate + L-aspartate = N-carbamoyl-L-aspartate + phosphate + H(+). It participates in pyrimidine metabolism; UMP biosynthesis via de novo pathway; (S)-dihydroorotate from bicarbonate: step 2/3. Functionally, catalyzes the condensation of carbamoyl phosphate and aspartate to form carbamoyl aspartate and inorganic phosphate, the committed step in the de novo pyrimidine nucleotide biosynthesis pathway. The chain is Aspartate carbamoyltransferase catalytic subunit from Pseudomonas fluorescens (strain SBW25).